The sequence spans 406 residues: Enoyl-[acyl-carrier-protein] reductase [NADH] (406 aa).

NAD(+) contacts are provided by residues 48–53, 74–75, 111–112, and 140–141; these read GASTGF, FE, DA, and IA. Tyr226 is a substrate binding site. The active-site Proton donor is Tyr236. NAD(+) is bound by residues Lys245 and 275-277; that span reads LVT.

This sequence belongs to the TER reductase family. Monomer.

It carries out the reaction a 2,3-saturated acyl-[ACP] + NAD(+) = a (2E)-enoyl-[ACP] + NADH + H(+). It participates in lipid metabolism; fatty acid biosynthesis. Functionally, involved in the final reduction of the elongation cycle of fatty acid synthesis (FAS II). Catalyzes the reduction of a carbon-carbon double bond in an enoyl moiety that is covalently linked to an acyl carrier protein (ACP). This Coxiella burnetii (strain Dugway 5J108-111) protein is Enoyl-[acyl-carrier-protein] reductase [NADH].